A 581-amino-acid chain; its full sequence is Polypeptide N-acetylgalactosaminyltransferase 12 (581 aa).

The Cytoplasmic segment spans residues 1-19 (MWGRTARRRCPRELRRGRE). Residues 20–37 (ALLVLLALLALAGLGSVL) traverse the membrane as a helical; Signal-anchor for type II membrane protein segment. Residues 38–581 (RAQRGAGAGA…QKWFFKERML (544 aa)) are Lumenal-facing. A disordered region spans residues 43 to 67 (AGAGAAEPGPPRTPRPGRREPVMPR). Cystine bridges form between Cys-125–Cys-358, Cys-349–Cys-422, Cys-458–Cys-479, Cys-506–Cys-521, and Cys-547–Cys-566. The tract at residues 135–244 (LPRTSVIIAF…EGWLEPLLQR (110 aa)) is catalytic subdomain A. Positions 176 and 205 each coordinate substrate. Mn(2+)-binding residues include Asp-228 and His-230. Residues 304–366 (VIRSPTMAGG…PCSHVGHVFP (63 aa)) form a catalytic subdomain B region. Trp-335 lines the substrate pocket. Residue His-363 participates in Mn(2+) binding. Tyr-371 provides a ligand contact to substrate. One can recognise a Ricin B-type lectin domain in the interval 445 to 577 (FFGMLQNKGL…NSDHQKWFFK (133 aa)).

This sequence belongs to the glycosyltransferase 2 family. GalNAc-T subfamily. The cofactor is Mn(2+). Widely expressed at different levels of expression. Highly expressed in digestive organs such as small intestine, stomach, pancreas and colon. Expressed at intermediate level in testis, thyroid gland and spleen. Weakly expressed in whole brain, cerebral cortex, cerebellum, fetal brain, bone marrow, thymus, leukocytes, heart, skeletal muscle, liver, lung, esophagus, kidney, adrenal gland, mammary gland, uterus, placenta, ovary and prostate.

It localises to the golgi apparatus membrane. The catalysed reaction is L-seryl-[protein] + UDP-N-acetyl-alpha-D-galactosamine = a 3-O-[N-acetyl-alpha-D-galactosaminyl]-L-seryl-[protein] + UDP + H(+). It carries out the reaction L-threonyl-[protein] + UDP-N-acetyl-alpha-D-galactosamine = a 3-O-[N-acetyl-alpha-D-galactosaminyl]-L-threonyl-[protein] + UDP + H(+). It participates in protein modification; protein glycosylation. In terms of biological role, catalyzes the initial reaction in O-linked oligosaccharide biosynthesis, the transfer of an N-acetyl-D-galactosamine residue to a serine or threonine residue on the protein receptor. Has activity toward non-glycosylated peptides such as Muc5AC, Muc1a and EA2, and no detectable activity with Muc2 and Muc7. Displays enzymatic activity toward the Gal-NAc-Muc5AC glycopeptide, but no detectable activity to mono-GalNAc-glycosylated Muc1a, Muc2, Muc7 and EA2. May play an important role in the initial step of mucin-type oligosaccharide biosynthesis in digestive organs. In Homo sapiens (Human), this protein is Polypeptide N-acetylgalactosaminyltransferase 12 (GALNT12).